Reading from the N-terminus, the 335-residue chain is Glucokinase (335 aa).

Position 11–16 (Ala-11–Thr-16) interacts with ATP.

Belongs to the bacterial glucokinase family.

The protein resides in the cytoplasm. The enzyme catalyses D-glucose + ATP = D-glucose 6-phosphate + ADP + H(+). The protein is Glucokinase of Xanthomonas campestris pv. campestris (strain 8004).